A 686-amino-acid polypeptide reads, in one-letter code: U3 small nucleolar RNA-associated protein 4 homolog (686 aa).

WD repeat units lie at residues 14–53 (YVPS…FQEK), 57–96 (GHES…IKYT), 99–138 (AFGG…IQFA), 143–181 (RQKS…IIRK), 193–231 (KSRC…LVKS), 234–273 (VANA…SNSS), 285–322 (HHTH…EVKN), 324–359 (DAAL…ELWR), 435–474 (SFLR…FKHL), 482–521 (GTVE…LHCT), and 524–563 (AYNF…YTEW). Lys-321 is covalently cross-linked (Glycyl lysine isopeptide (Lys-Gly) (interchain with G-Cter in SUMO2)).

In terms of assembly, interacts with HIVEP1 Interacts with NOL11. Part of the small subunit (SSU) processome, composed of more than 70 proteins and the RNA chaperone small nucleolar RNA (snoRNA) U3. May be a component of the proposed t-UTP subcomplex of the ribosomal small subunit (SSU) processome containing at least UTP4, WDR43, HEATR1, UTP15, WDR75. May be phosphorylated during mitosis; may control the association of this protein with WRD43 and UTP15. In terms of tissue distribution, expressed in liver.

The protein resides in the nucleus. The protein localises to the nucleolus. Its subcellular location is the chromosome. In terms of biological role, ribosome biogenesis factor. Involved in nucleolar processing of pre-18S ribosomal RNA. Part of the small subunit (SSU) processome, first precursor of the small eukaryotic ribosomal subunit. During the assembly of the SSU processome in the nucleolus, many ribosome biogenesis factors, an RNA chaperone and ribosomal proteins associate with the nascent pre-rRNA and work in concert to generate RNA folding, modifications, rearrangements and cleavage as well as targeted d Involved in SSU pre-rRNA processing at sites A', A0, 1 and 2b. Required for optimal pre-ribosomal RNA transcription by RNA polymerase. May be a transcriptional regulator. This Mus musculus (Mouse) protein is U3 small nucleolar RNA-associated protein 4 homolog (Utp4).